Reading from the N-terminus, the 261-residue chain is Imidazole glycerol phosphate synthase subunit HisF (261 aa).

Catalysis depends on residues D16 and D135.

Belongs to the HisA/HisF family. In terms of assembly, heterodimer of HisH and HisF.

The protein resides in the cytoplasm. It catalyses the reaction 5-[(5-phospho-1-deoxy-D-ribulos-1-ylimino)methylamino]-1-(5-phospho-beta-D-ribosyl)imidazole-4-carboxamide + L-glutamine = D-erythro-1-(imidazol-4-yl)glycerol 3-phosphate + 5-amino-1-(5-phospho-beta-D-ribosyl)imidazole-4-carboxamide + L-glutamate + H(+). Its pathway is amino-acid biosynthesis; L-histidine biosynthesis; L-histidine from 5-phospho-alpha-D-ribose 1-diphosphate: step 5/9. Functionally, IGPS catalyzes the conversion of PRFAR and glutamine to IGP, AICAR and glutamate. The HisF subunit catalyzes the cyclization activity that produces IGP and AICAR from PRFAR using the ammonia provided by the HisH subunit. The polypeptide is Imidazole glycerol phosphate synthase subunit HisF (Mycolicibacterium gilvum (strain PYR-GCK) (Mycobacterium gilvum (strain PYR-GCK))).